The primary structure comprises 102 residues: Aspartyl/glutamyl-tRNA(Asn/Gln) amidotransferase subunit C (102 aa).

This sequence belongs to the GatC family. Heterotrimer of A, B and C subunits.

The catalysed reaction is L-glutamyl-tRNA(Gln) + L-glutamine + ATP + H2O = L-glutaminyl-tRNA(Gln) + L-glutamate + ADP + phosphate + H(+). It catalyses the reaction L-aspartyl-tRNA(Asn) + L-glutamine + ATP + H2O = L-asparaginyl-tRNA(Asn) + L-glutamate + ADP + phosphate + 2 H(+). In terms of biological role, allows the formation of correctly charged Asn-tRNA(Asn) or Gln-tRNA(Gln) through the transamidation of misacylated Asp-tRNA(Asn) or Glu-tRNA(Gln) in organisms which lack either or both of asparaginyl-tRNA or glutaminyl-tRNA synthetases. The reaction takes place in the presence of glutamine and ATP through an activated phospho-Asp-tRNA(Asn) or phospho-Glu-tRNA(Gln). This is Aspartyl/glutamyl-tRNA(Asn/Gln) amidotransferase subunit C from Bordetella bronchiseptica (strain ATCC BAA-588 / NCTC 13252 / RB50) (Alcaligenes bronchisepticus).